The sequence spans 174 residues: Gamma-crystallin D (174 aa).

2 consecutive Beta/gamma crystallin 'Greek key' domains span residues 2–40 and 41–83; these read GKITFYEDRGFQGRCYECSSDHVNLQSYFSRCNSIRVDS and GCWM…RIIP. Residues 84–87 form a connecting peptide region; the sequence is YSGS. Beta/gamma crystallin 'Greek key' domains are found at residues 88–128 and 129–171; these read HKMR…NVLD and GCWI…RRVI.

It belongs to the beta/gamma-crystallin family. As to quaternary structure, monomer.

In terms of biological role, crystallins are the dominant structural components of the vertebrate eye lens. This chain is Gamma-crystallin D (CRYGD), found in Macropus fuliginosus (Western gray kangaroo).